Here is a 103-residue protein sequence, read N- to C-terminus: Small ribosomal subunit protein uS10 (103 aa).

The protein belongs to the universal ribosomal protein uS10 family. In terms of assembly, part of the 30S ribosomal subunit.

Its function is as follows. Involved in the binding of tRNA to the ribosomes. The sequence is that of Small ribosomal subunit protein uS10 from Psychrobacter arcticus (strain DSM 17307 / VKM B-2377 / 273-4).